Reading from the N-terminus, the 931-residue chain is MIASIRTTRRLSNYNSVIPPPEPLNTDPDMHPLKRRFEPVLLDRYPPQEATDEITRRGKFPDYVPMFAFPNDIQIVSSDDRPRSTWHGFTMTSDDNSKLYGITIIIWTALNAEVAEEVEKKCEQWRQSHMSEEERELAASLGVRLAGERTHLSQLLAKLPTIPSGSPARERLEDEISTVEEKITLMTDMLRPLRHGAASKIEGLTAGESGLWTPRAYGILGRDAANMSFWKEWLKAIVTPMTDGGVLRIPPSSPSVGRWQPLERYVVNLCTEAFNPLGSKTQVELGVRELRLYARKEADNEIPGSRSIDLYALFRCLSLENIVALFEYAMAESRIIFLSSHTSMLHLACHALANLLYPLKWSSIFIPVLPARLLSALEAPCPYIVGIERRYDRIELPEDDYVLVDLDKDTIDATSQPVRLPRQARRKLMSLLQVAAPHKLRYGVTTGPPPYAMESFPYDAFSTENAALFRSATPKSTLGKWVSQSSSGFGEPDPPNEVLPPLFNAFASAKVDNGKSDRPSTSKSGKTSPQSSVSPVSINFPPMPSTPVSRSDSGFALAATLREKRSGHFGEEKMRRSSSFGIDKHPPYHKPNLPFLNGHQANLSISAISVDSQNSVVGGGSSGGGGYGNGYAPSTYAQSTLAASTIMPSMQIQPVRNTETTVWVEGHCFNWIPKDNTSICNICNDHAEGDGIYKCTGCKIFSHGRCLGHASLVCPEAFHPDRIRAAFVRCLASLLYTYRKYLGRPSKQQKANGQLYAFDMDGFIKSLPHDQHDYATMMRETQCFNEFIHDREMQPANNASIRVFDEIIMAKKARGRSGLSTGLSRLSTIRASHGASTYGGYAPPRGSSNSKIPAWLGDTSDHIWRTASVPLPKGNFPGEYRTVVTRTPARLDRSLMREPRSIQGMPRVEGRGARGLIRKQVPSMLGTTPPT.

Residues 13-32 (NYNSVIPPPEPLNTDPDMHP) form a disordered region. A uDENN domain is found at 19-277 (PPPEPLNTDP…NLCTEAFNPL (259 aa)). A cDENN domain is found at 301-433 (EIPGSRSIDL…ARRKLMSLLQ (133 aa)). One can recognise a dDENN domain in the interval 435–799 (AAPHKLRYGV…DREMQPANNA (365 aa)). Disordered regions lie at residues 478 to 552 (LGKW…SRSD) and 566 to 586 (SGHFGEEKMRRSSSFGIDKHP). The segment covering 521-537 (TSKSGKTSPQSSVSPVS) has biased composition (polar residues). Residues 566–575 (SGHFGEEKMR) show a composition bias toward basic and acidic residues. Residues 666-714 (GHCFNWIPKDNTSICNICNDHAEGDGIYKCTGCKIFSHGRCLGHASLVC) form a Phorbol-ester/DAG-type zinc finger.

The protein belongs to the EPD1 elicitor family.

It is found in the secreted. Its subcellular location is the host cell. In terms of biological role, acts as an elicitor that triggers cell death and defense responses in the host plants. The protein is Elicitor of plant defense protein 1 of Fusarium odoratissimum (strain NRRL 54006).